We begin with the raw amino-acid sequence, 473 residues long: MRLVVVGLWCLILGLILNPTKFCDAGVTSSYVRKSLSALPNAEDVDMPWDSDVFAVPSGYNAPQQVHITQGDYEGRGVIISWTTPYDKAGANKVVYWSENSKSQKRAMGTVVTYKYYNYTSAFIHHCTIKDLEYDTKYYYRLGFGDAKRQFWFVTPPKPGPDVPYVFGLIGDIGQTHDSNTTLTHYEQNSAKGQAVLFMGDLSYSNRWPNHDNNRWDTWGRFSERSVAYQPWIWTAGNHEIDYAPDIGEYQPFVPFTNRYPTPHEASGSGDPLWYAIKRASAHIIVLSSYSGFVKYSPQYKWFTSELEKVNRSETPWLIVLVHAPLYNSYEAHYMEGEAMRAIFEPYFVYYKVDIVFSGHVHSYERSERVSNVAYNIVNAKCTPVSDESAPVYITIGDGGNSEGLASEMTQPQPSYSAFREASFGHGIFDIKNRTHAHFSWHRNQDGASVEADSLWLLNRYWASEDASSMSAM.

A signal peptide spans 1–38 (MRLVVVGLWCLILGLILNPTKFCDAGVTSSYVRKSLSA). Residue Asn118 is glycosylated (N-linked (GlcNAc...) asparagine). Position 172 (Asp172) interacts with Fe cation. Asn180 carries N-linked (GlcNAc...) asparagine glycosylation. Fe cation contacts are provided by Asp201 and Tyr204. Residue Asp201 participates in Mn(2+) binding. Asn238 contacts Mn(2+). Asn238 contributes to the substrate binding site. N-linked (GlcNAc...) asparagine glycosylation is present at Asn311. Position 323 (His323) interacts with Mn(2+). Catalysis depends on His333, which acts as the Proton donor. His360 is a Mn(2+) binding site. 360-362 (HVH) is a binding site for substrate. His362 provides a ligand contact to Fe cation. Asn433 carries N-linked (GlcNAc...) asparagine glycosylation.

This sequence belongs to the metallophosphoesterase superfamily. Purple acid phosphatase family. In terms of assembly, homodimer; disulfide-linked. Fe cation serves as cofactor. Mn(2+) is required as a cofactor. It depends on Zn(2+) as a cofactor. The cofactor is Cu(2+). Requires Mg(2+) as cofactor.

The protein localises to the secreted. It carries out the reaction a phosphate monoester + H2O = an alcohol + phosphate. This chain is Purple acid phosphatase 1 (PAP1), found in Ipomoea batatas (Sweet potato).